Reading from the N-terminus, the 383-residue chain is Protein FAM217B (383 aa).

Disordered stretches follow at residues 1-70 (MNAG…CQGA), 89-115 (ADED…PPDL), 200-222 (KAKG…KSPG), 232-251 (SKPL…RKKA), 284-325 (QTLE…HIRV), and 338-383 (SCKA…YKLK). The segment covering 8 to 43 (NKVQHSKNSSGKRQSKSQVPHASSQPRSSLTAVTQP) has biased composition (polar residues). The span at 44 to 56 (TEEKLKESISPEA) shows a compositional bias: basic and acidic residues. Over residues 374–383 (GVKQNTYKLK) the composition is skewed to polar residues.

The protein belongs to the FAM217 family.

The sequence is that of Protein FAM217B (FAM217B) from Homo sapiens (Human).